A 282-amino-acid chain; its full sequence is tRNA (guanine-N(1)-)-methyltransferase (282 aa).

145–150 (IGDYVL) is an S-adenosyl-L-methionine binding site.

Belongs to the RNA methyltransferase TrmD family. In terms of assembly, homodimer.

It is found in the cytoplasm. It catalyses the reaction guanosine(37) in tRNA + S-adenosyl-L-methionine = N(1)-methylguanosine(37) in tRNA + S-adenosyl-L-homocysteine + H(+). Its function is as follows. Specifically methylates guanosine-37 in various tRNAs. The chain is tRNA (guanine-N(1)-)-methyltransferase from Streptomyces avermitilis (strain ATCC 31267 / DSM 46492 / JCM 5070 / NBRC 14893 / NCIMB 12804 / NRRL 8165 / MA-4680).